The sequence spans 414 residues: Putative transporter AmpG 4 (414 aa).

Helical transmembrane passes span 15–35 (IFIL…TLAV), 44–63 (IAVI…KVFW), 84–104 (WLIL…KENP), 109–129 (TSFY…DIAV), 150–170 (VFGY…LAEI), 177–197 (LTFC…ITVN), 230–250 (FAVT…MLGA), 268–288 (IIAK…GGIV), 295–315 (FKGL…FIWL), 324–344 (ALLI…TALV), 360–379 (YALL…IYAG), and 389–409 (GFFL…MYLN).

It belongs to the major facilitator superfamily.

The protein localises to the cell inner membrane. This chain is Putative transporter AmpG 4 (ampG4), found in Rickettsia conorii (strain ATCC VR-613 / Malish 7).